Here is a 275-residue protein sequence, read N- to C-terminus: Seminase (275 aa).

The N-terminal stretch at 1–19 (MKRLLFLFLLAGILINNHA) is a signal peptide. N23 carries N-linked (GlcNAc...) asparagine glycosylation. Residues 44 to 268 (VIGGRVTTNA…VKPFIVKGIK (225 aa)) form the Peptidase S1 domain. C70 and C86 are joined by a disulfide. Active-site charge relay system residues include H85 and D131. Disulfide bonds link C194–C210 and C220–C244. Residue S224 is the Charge relay system of the active site.

The protein belongs to the peptidase S1 family. In terms of processing, undergoes cleavage in the male during mating with a cleaved product detected in the ejaculatory duct and/or bulb of males by 8-10 minutes after the start of mating. Further cleavage occurs in the mated female. In terms of tissue distribution, produced in the male accessory glands and secreted into seminal fluid.

It is found in the secreted. In terms of biological role, seminal fluid protease which is required for cleavage and probably also activation of the metalloprotease Semp1. Also required for a number of female post-mating responses independent of Semp1 including egg laying and sperm usage. The polypeptide is Seminase (Drosophila melanogaster (Fruit fly)).